Here is a 976-residue protein sequence, read N- to C-terminus: Probable alanine--tRNA ligase, chloroplastic/mitochondrial (976 aa).

A chloroplast and mitochondrion-targeting transit peptide spans 1-54 (MPRPGFAHATAPALAHARARISPVARRRVVVMRTRVDGAAKSLVTQLRLALGST). Positions 71 to 95 (LGTATNDQSTGTRANPNAEGKDNSG) are disordered. The span at 73 to 85 (TATNDQSTGTRAN) shows a compositional bias: polar residues.

The protein belongs to the class-II aminoacyl-tRNA synthetase family. Monomer. Requires Zn(2+) as cofactor.

It localises to the plastid. It is found in the chloroplast. The protein resides in the mitochondrion. It catalyses the reaction tRNA(Ala) + L-alanine + ATP = L-alanyl-tRNA(Ala) + AMP + diphosphate. Its function is as follows. Catalyzes the attachment of alanine to tRNA(Ala) in a two-step reaction: alanine is first activated by ATP to form Ala-AMP and then transferred to the acceptor end of tRNA(Ala). Also edits incorrectly charged tRNA(Ala) via its editing domain. The chain is Probable alanine--tRNA ligase, chloroplastic/mitochondrial from Ostreococcus tauri.